A 173-amino-acid polypeptide reads, in one-letter code: Enhancer of split mdelta protein (173 aa).

In terms of domain architecture, bHLH spans 15 to 72; it reads YRKVTKPLLERKRRARMNLYLDELKDLIVDTMDAQGEQVSKLEKADILELTVNYLKAQ. In terms of domain architecture, Orange spans 93–126; sequence FRAGYTQAAYEVSHIFSTVPGLDLKFGTHLMKQL. Positions 147–173 are disordered; that stretch reads VNLADQKRSKSPREEDIHHGEEVWRPW. Basic and acidic residues predominate over residues 151-173; it reads DQKRSKSPREEDIHHGEEVWRPW. The WRPW motif signature appears at 170–173; the sequence is WRPW.

As to quaternary structure, transcription repression requires formation of a complex with a corepressor protein (Groucho).

It is found in the nucleus. Its function is as follows. Transcriptional repressor of genes that require a bHLH protein for their transcription. May serve as a transcriptional regulator of the Achaete-scute complex (AS-C) genes. Contributes to the neural-epidermal lineage decision during early neurogenesis. As part of the Notch signaling pathway, required to maintain the self-renewal and identity of type II neuroblasts by regulating the expression of the transcriptional repressor erm. In Drosophila melanogaster (Fruit fly), this protein is Enhancer of split mdelta protein.